We begin with the raw amino-acid sequence, 100 residues long: Urease subunit gamma 2 (100 aa).

It belongs to the urease gamma subunit family. In terms of assembly, heterotrimer of UreA (gamma), UreB (beta) and UreC (alpha) subunits. Three heterotrimers associate to form the active enzyme.

It is found in the cytoplasm. It catalyses the reaction urea + 2 H2O + H(+) = hydrogencarbonate + 2 NH4(+). The protein operates within nitrogen metabolism; urea degradation; CO(2) and NH(3) from urea (urease route): step 1/1. Its function is as follows. Disrupting the ure2 operon has no effect on urease activity or pathogen survival in BALB/c mice when administered orally. This is Urease subunit gamma 2 from Brucella abortus (strain 2308).